The chain runs to 223 residues: Thiamine-phosphate synthase (223 aa).

4-amino-2-methyl-5-(diphosphooxymethyl)pyrimidine contacts are provided by residues 37–41 and Asp-72; that span reads QFREK. Residues Asp-73 and Asp-92 each contribute to the Mg(2+) site. Ser-110 lines the 4-amino-2-methyl-5-(diphosphooxymethyl)pyrimidine pocket. 136-138 serves as a coordination point for 2-[(2R,5Z)-2-carboxy-4-methylthiazol-5(2H)-ylidene]ethyl phosphate; it reads TQS. Lys-139 contributes to the 4-amino-2-methyl-5-(diphosphooxymethyl)pyrimidine binding site. Residues Gly-168 and 188-189 each bind 2-[(2R,5Z)-2-carboxy-4-methylthiazol-5(2H)-ylidene]ethyl phosphate; that span reads IS.

This sequence belongs to the thiamine-phosphate synthase family. It depends on Mg(2+) as a cofactor.

It carries out the reaction 2-[(2R,5Z)-2-carboxy-4-methylthiazol-5(2H)-ylidene]ethyl phosphate + 4-amino-2-methyl-5-(diphosphooxymethyl)pyrimidine + 2 H(+) = thiamine phosphate + CO2 + diphosphate. The enzyme catalyses 2-(2-carboxy-4-methylthiazol-5-yl)ethyl phosphate + 4-amino-2-methyl-5-(diphosphooxymethyl)pyrimidine + 2 H(+) = thiamine phosphate + CO2 + diphosphate. It catalyses the reaction 4-methyl-5-(2-phosphooxyethyl)-thiazole + 4-amino-2-methyl-5-(diphosphooxymethyl)pyrimidine + H(+) = thiamine phosphate + diphosphate. It functions in the pathway cofactor biosynthesis; thiamine diphosphate biosynthesis; thiamine phosphate from 4-amino-2-methyl-5-diphosphomethylpyrimidine and 4-methyl-5-(2-phosphoethyl)-thiazole: step 1/1. Functionally, condenses 4-methyl-5-(beta-hydroxyethyl)thiazole monophosphate (THZ-P) and 2-methyl-4-amino-5-hydroxymethyl pyrimidine pyrophosphate (HMP-PP) to form thiamine monophosphate (TMP). This is Thiamine-phosphate synthase from Streptococcus agalactiae serotype Ia (strain ATCC 27591 / A909 / CDC SS700).